A 152-amino-acid polypeptide reads, in one-letter code: Transcriptional repressor NrdR (152 aa).

The segment at 3 to 34 is a zinc-finger region; sequence CPHCHHNGSRVIDSRPAEDGMSIRRRRECVNC. Residues 49-139 enclose the ATP-cone domain; sequence LLVVKKDGTR…VYRQFKDVDA (91 aa).

It belongs to the NrdR family. It depends on Zn(2+) as a cofactor.

Its function is as follows. Negatively regulates transcription of bacterial ribonucleotide reductase nrd genes and operons by binding to NrdR-boxes. In Limosilactobacillus fermentum (strain NBRC 3956 / LMG 18251) (Lactobacillus fermentum), this protein is Transcriptional repressor NrdR.